The following is an 83-amino-acid chain: Delta-conotoxin-like Ac6.1 (83 aa).

The N-terminal stretch at 1–22 is a signal peptide; the sequence is MKLTCVVIVAVLFLTAWTFVMA. Positions 23–51 are excised as a propeptide; sequence DDSRYGLKDLFPKARHEMKNPEASKLNKR. 3 disulfides stabilise this stretch: Cys54-Cys69, Cys61-Cys73, and Cys68-Cys78. 4-hydroxyproline occurs at positions 57 and 65.

This sequence belongs to the conotoxin O1 superfamily. Expressed by the venom duct.

It localises to the secreted. Its function is as follows. Delta-conotoxins bind to site 6 of voltage-gated sodium channels (Nav) and inhibit the inactivation process. The polypeptide is Delta-conotoxin-like Ac6.1 (Conus achatinus (Little frog cone)).